Here is a 184-residue protein sequence, read N- to C-terminus: Vacuolar protein sorting-associated protein 68 (184 aa).

Methionine 1 is modified (N-acetylmethionine). Position 8 is a phosphoserine (serine 8). The helical transmembrane segment at 26 to 46 (GVYLSGALYALGFWIFLDAVL) threads the bilayer. Asparagine 52 carries N-linked (GlcNAc...) asparagine glycosylation. 3 helical membrane-spanning segments follow: residues 56-76 (VHVTFIDWIPFLCSTLGTLIV), 115-135 (LFFGFALLAGGLSGSIVVLII), and 150-170 (MGVNNVLGNVCILLSCVVLWI).

This sequence belongs to the UPF0220 family.

The protein resides in the vacuole membrane. It is found in the mitochondrion. Functionally, involved in vacuolar protein sorting. This chain is Vacuolar protein sorting-associated protein 68 (VPS68), found in Saccharomyces cerevisiae (strain ATCC 204508 / S288c) (Baker's yeast).